The primary structure comprises 94 residues: MEDDEKGGFRGKDGEGKFGRKNAKYKKKVCKFCADKALLAGLDYKRVDILERFVTNRGKIIPRRITGTCGKHQRALAREIRKSRSIGLLPFKVL.

This sequence belongs to the bacterial ribosomal protein bS18 family. As to quaternary structure, part of the 30S ribosomal subunit. Forms a tight heterodimer with protein bS6.

Its function is as follows. Binds as a heterodimer with protein bS6 to the central domain of the 16S rRNA, where it helps stabilize the platform of the 30S subunit. The polypeptide is Small ribosomal subunit protein bS18 (Leptospira biflexa serovar Patoc (strain Patoc 1 / Ames)).